The following is a 552-amino-acid chain: MAFQEILESLGGMGRYQVIHVVLLSLPVFMLASHNLMQNFTAATPSHHCRINGTYEETNFTGPWLRALLPMTPTGEFSKCLRYTTPQYELLENNLTQSYDDLETEPCLDGWVYDHSEFASTIITQWDLVCNHRRMRQVAQSIYMAGVLVGSILFGGLSDKFGRRPLNIWSNLQMFVTGICAAFSPNYIWYCIFRFLTGVAFSGIVLNSYSLTVEWIPTGNRAFTSTATGYCYTMGQLVLVGLAFIIRDWQWLQLAASIPFFFYFLYSWWIPESGRWLVLSGKPEVACKALKKVAQINGKKEAGEKLTVEILKSSMQREINASHNSTYSALDLVRTPVVRRISFCISCTWFSTSFAYYGLALDLQSFGVSIYIIQIIFGTVDIPAKFISYFITTYVGRRVSQAITLILAGIAILVNISVPQDFQTVRTAMAVFGKGCLAASFNCLYLYTGELYPTVIRQTGMGLGAMMARLGGIIAPLAQMTGDIYHSLPLIIFGCLPILSGIAGCFLPETLGVPLPETIEEVESPDKQQKDVNVSAKIPLKETELYNMKTDV.

At 1-16 (MAFQEILESLGGMGRY) the chain is on the cytoplasmic side. A helical membrane pass occupies residues 17-37 (QVIHVVLLSLPVFMLASHNLM). Residues 38-137 (QNFTAATPSH…LVCNHRRMRQ (100 aa)) lie on the Extracellular side of the membrane. The chain crosses the membrane as a helical span at residues 138–158 (VAQSIYMAGVLVGSILFGGLS). Over 159–164 (DKFGRR) the chain is Cytoplasmic. Residues 165–184 (PLNIWSNLQMFVTGICAAFS) form a helical membrane-spanning segment. Pro185 is a topological domain (extracellular). The chain crosses the membrane as a helical span at residues 186-206 (NYIWYCIFRFLTGVAFSGIVL). Topologically, residues 207–225 (NSYSLTVEWIPTGNRAFTS) are cytoplasmic. The chain crosses the membrane as a helical span at residues 226 to 246 (TATGYCYTMGQLVLVGLAFII). Residues 247–250 (RDWQ) lie on the Extracellular side of the membrane. The chain crosses the membrane as a helical span at residues 251–271 (WLQLAASIPFFFYFLYSWWIP). Residues 272 to 336 (ESGRWLVLSG…YSALDLVRTP (65 aa)) lie on the Cytoplasmic side of the membrane. Residues 337 to 356 (VVRRISFCISCTWFSTSFAY) traverse the membrane as a helical segment. Residue Tyr357 is a topological domain, extracellular. The helical transmembrane segment at 358 to 378 (GLALDLQSFGVSIYIIQIIFG) threads the bilayer. Residues 379–398 (TVDIPAKFISYFITTYVGRR) are Cytoplasmic-facing. A helical membrane pass occupies residues 399–419 (VSQAITLILAGIAILVNISVP). The Extracellular portion of the chain corresponds to 420–426 (QDFQTVR). Residues 427–447 (TAMAVFGKGCLAASFNCLYLY) form a helical membrane-spanning segment. At 448–459 (TGELYPTVIRQT) the chain is on the cytoplasmic side. A helical membrane pass occupies residues 460–480 (GMGLGAMMARLGGIIAPLAQM). Over 481 to 487 (TGDIYHS) the chain is Extracellular. The chain crosses the membrane as a helical span at residues 488-508 (LPLIIFGCLPILSGIAGCFLP). Topologically, residues 509 to 552 (ETLGVPLPETIEEVESPDKQQKDVNVSAKIPLKETELYNMKTDV) are cytoplasmic.

It belongs to the major facilitator (TC 2.A.1) superfamily. Organic cation transporter (TC 2.A.1.19) family. In terms of processing, glycosylated. Glycosylation is necessary for proper targeting of the transporter to the plasma membrane.

The protein resides in the cell membrane. It is found in the basolateral cell membrane. Its subcellular location is the basal cell membrane. In terms of biological role, involved in the renal elimination of endogenous and exogenous organic anions. Mediates the sodium-independent uptake of p-aminohippurate (PAH), cidofovir, adefovir, 9-(2-phosphonylmethoxyethyl) guanine (PMEG), 9-(2-phosphonylmethoxyethyl) diaminopurine (PMEDAP) and edaravone sulfate. PAH uptake is inhibited by furosemide, steviol, phorbol 12-myristate 13-acetate (PMA), calcium ionophore A23187, benzylpenicillin, furosemide, indomethacin, bumetamide, losartan, probenecid, phenol red, urate, and alpha-ketoglutarate. This Xenopus laevis (African clawed frog) protein is Solute carrier family 22 member 6-B (slc22a6-b).